A 347-amino-acid polypeptide reads, in one-letter code: RNA 3'-terminal phosphate cyclase (347 aa).

ATP-binding positions include Q101 and H286 to D289. The active-site Tele-AMP-histidine intermediate is H312.

The protein belongs to the RNA 3'-terminal cyclase family. Type 1 subfamily.

Its subcellular location is the cytoplasm. It catalyses the reaction a 3'-end 3'-phospho-ribonucleotide-RNA + ATP = a 3'-end 2',3'-cyclophospho-ribonucleotide-RNA + AMP + diphosphate. In terms of biological role, catalyzes the conversion of 3'-phosphate to a 2',3'-cyclic phosphodiester at the end of RNA. The mechanism of action of the enzyme occurs in 3 steps: (A) adenylation of the enzyme by ATP; (B) transfer of adenylate to an RNA-N3'P to produce RNA-N3'PP5'A; (C) and attack of the adjacent 2'-hydroxyl on the 3'-phosphorus in the diester linkage to produce the cyclic end product. The biological role of this enzyme is unknown but it is likely to function in some aspects of cellular RNA processing. The polypeptide is RNA 3'-terminal phosphate cyclase (Pyrobaculum neutrophilum (strain DSM 2338 / JCM 9278 / NBRC 100436 / V24Sta) (Thermoproteus neutrophilus)).